The sequence spans 74 residues: DNA-directed RNA polymerase subunit omega (74 aa).

The protein belongs to the RNA polymerase subunit omega family. As to quaternary structure, the RNAP catalytic core consists of 2 alpha, 1 beta, 1 beta' and 1 omega subunit. When a sigma factor is associated with the core the holoenzyme is formed, which can initiate transcription.

It carries out the reaction RNA(n) + a ribonucleoside 5'-triphosphate = RNA(n+1) + diphosphate. Functionally, promotes RNA polymerase assembly. Latches the N- and C-terminal regions of the beta' subunit thereby facilitating its interaction with the beta and alpha subunits. The protein is DNA-directed RNA polymerase subunit omega of Helicobacter pylori (strain Shi470).